The following is a 173-amino-acid chain: MEKQKDNVTSTKEEILCTKKEQNIDMEKFNSIGFLNEFCHKNKYKPPSYTTLNQNGPDHSPTFNIECRIVDYKPNGKFIGSGLSMKEAKKNAAFKTIKELNLLTLNTENKSSFRVVEIIPYIEKEPHEDEGLLCMWNGDCKKIKITLRKKDGSIQKFKSFLLKIEDSVDIDDI.

The DRBM domain occupies 30-102 (NSIGFLNEFC…AFKTIKELNL (73 aa)).

The polypeptide is DRBM domain-containing protein 340R (Invertebrate iridescent virus 6 (IIV-6)).